Consider the following 856-residue polypeptide: Translation initiation factor IF-2 (856 aa).

Residues 356 to 526 enclose the tr-type G domain; it reads PRAPVVTVMG…LLIADLLELK (171 aa). A G1 region spans residues 365-372; the sequence is GHVDHGKT. 365 to 372 provides a ligand contact to GTP; it reads GHVDHGKT. The tract at residues 390–394 is G2; sequence GITQH. Positions 412–415 are G3; the sequence is DTPG. Residues 412 to 416 and 466 to 469 contribute to the GTP site; these read DTPGH and NKID. The interval 466 to 469 is G4; that stretch reads NKID. A G5 region spans residues 502–504; that stretch reads SAK.

The protein belongs to the TRAFAC class translation factor GTPase superfamily. Classic translation factor GTPase family. IF-2 subfamily.

It localises to the cytoplasm. Functionally, one of the essential components for the initiation of protein synthesis. Protects formylmethionyl-tRNA from spontaneous hydrolysis and promotes its binding to the 30S ribosomal subunits. Also involved in the hydrolysis of GTP during the formation of the 70S ribosomal complex. The polypeptide is Translation initiation factor IF-2 (Ehrlichia ruminantium (strain Gardel)).